Here is a 241-residue protein sequence, read N- to C-terminus: Histone H1-II (241 aa).

Positions 1–10 (MASDAPEVKA) are enriched in basic and acidic residues. Disordered stretches follow at residues 1-27 (MASD…THPP) and 89-241 (NSYK…AKKA). The span at 11 to 20 (PKAKTQKKPK) shows a compositional bias: basic residues. Residues 24–95 (THPPYIQMVT…KVKNSYKLSD (72 aa)) form the H15 domain. The span at 99 to 111 (SKAKAAAKPKAAP) shows a compositional bias: basic residues. 3 repeat units span residues 111-116 (PKKAAA), 117-122 (PKKAAA), and 123-128 (PKKAKA). An 8 X 6 AA repeats of P-K-K-A-[AK]-A region spans residues 111-217 (PKKAAAPKKA…KAATPKKAKA (107 aa)). Over residues 129–155 (PKKEGEKKAVKPKSEKKAAKPKTEKKP) the composition is skewed to basic and acidic residues. Composition is skewed to basic residues over residues 156–184 (KAAK…KATP) and 194–241 (AAPK…AKKA). Residues 183–186 (TPKK) mediate DNA binding. A run of 5 repeats spans residues 184 to 189 (PKKAAA), 190 to 195 (PKKAAA), 196 to 201 (PKKAKA), 204 to 209 (PKKAKA), and 212 to 217 (PKKAKA). 2 consecutive DNA-binding regions follow at residues 203 to 206 (TPKK) and 211 to 214 (TPKK).

The protein belongs to the histone H1/H5 family.

The protein localises to the nucleus. It localises to the chromosome. Functionally, histones H1 are necessary for the condensation of nucleosome chains into higher-order structures. The sequence is that of Histone H1-II (H1-II) from Volvox carteri (Green alga).